The primary structure comprises 319 residues: Tetrahydromethanopterin S-methyltransferase subunit H (319 aa).

This sequence belongs to the MtrH family. In terms of assembly, the complex is composed of 8 subunits; MtrA, MtrB, MtrC, MtrD, MtrE, MtrF, MtrG and MtrH.

The enzyme catalyses 5-methyl-5,6,7,8-tetrahydromethanopterin + coenzyme M + 2 Na(+)(in) = 5,6,7,8-tetrahydromethanopterin + methyl-coenzyme M + 2 Na(+)(out). The protein operates within one-carbon metabolism; methanogenesis from CO(2); methyl-coenzyme M from 5,10-methylene-5,6,7,8-tetrahydromethanopterin: step 2/2. In terms of biological role, part of a complex that catalyzes the formation of methyl-coenzyme M and tetrahydromethanopterin from coenzyme M and methyl-tetrahydromethanopterin. This is an energy-conserving, sodium-ion translocating step. MtrH catalyzes the transfer of the methyl group from methyl-tetrahydromethanopterin to the corrinoid prosthetic group of MtrA. This is Tetrahydromethanopterin S-methyltransferase subunit H from Methanocaldococcus jannaschii (strain ATCC 43067 / DSM 2661 / JAL-1 / JCM 10045 / NBRC 100440) (Methanococcus jannaschii).